The primary structure comprises 125 residues: uncharacterized protein (125 aa).

The next 3 membrane-spanning stretches (helical) occupy residues 20 to 42 (RNGG…LTIL), 57 to 76 (LMNA…GVVV), and 81 to 103 (YLFV…YMAS).

It localises to the cell membrane. This is an uncharacterized protein from Archaeoglobus fulgidus (strain ATCC 49558 / DSM 4304 / JCM 9628 / NBRC 100126 / VC-16).